Reading from the N-terminus, the 348-residue chain is Heat-inducible transcription repressor HrcA (348 aa).

This sequence belongs to the HrcA family.

In terms of biological role, negative regulator of class I heat shock genes (grpE-dnaK-dnaJ and groELS operons). Prevents heat-shock induction of these operons. This is Heat-inducible transcription repressor HrcA from Syntrophobacter fumaroxidans (strain DSM 10017 / MPOB).